Reading from the N-terminus, the 415-residue chain is Probable glucan 1,3-beta-glucosidase A (415 aa).

Positions 1–22 are cleaved as a signal peptide; it reads MLSRLSQTALVALSLMTVLTEA. The active-site Proton donor is the Glu-210. Cystine bridges form between Cys-290/Cys-414 and Cys-315/Cys-341. Glu-307 (nucleophile) is an active-site residue. The segment at 335–359 is disordered; the sequence is SPRYGDCGNKRQGSSSGLSEQERSD.

This sequence belongs to the glycosyl hydrolase 5 (cellulase A) family. Monomer. The cofactor is Mn(2+).

Its subcellular location is the secreted. The catalysed reaction is Successive hydrolysis of beta-D-glucose units from the non-reducing ends of (1-&gt;3)-beta-D-glucans, releasing alpha-glucose.. Beta-glucanases participate in the metabolism of beta-glucan, the main structural component of the cell wall. It could also function biosynthetically as a transglycosylase. This Aspergillus clavatus (strain ATCC 1007 / CBS 513.65 / DSM 816 / NCTC 3887 / NRRL 1 / QM 1276 / 107) protein is Probable glucan 1,3-beta-glucosidase A (exgA).